We begin with the raw amino-acid sequence, 349 residues long: Dehydrogenase FPY6 (349 aa).

Belongs to the Gfo/Idh/MocA family.

It participates in secondary metabolite biosynthesis. Functionally, dehydrogenase; part of the gene cluster that mediates the biosynthesis of the gamma-pyrones fusapyrone (FPY) and deoxyfusapyrone (dFPY). FPY is an undecaketide and thus likely synthesized by the polyketide synthase FPY1 from acetyl-CoA functioning as starter unit and the addition of 10 malonyl-CoA extender units by successive Claisen-condensations. Next to this, FPY shares some rare features: C-glycosylated 4-deoxyglucose at C-3, a gem-dimethyl group at C-13, and an alpha-beta to beta-gamma double bond shift at C-20. During FPY biosynthesis mono-C-methyl groups are transferred to the tetra-, penta-, hexa- and heptaketide, while two C-methyl groups are transferred to the nonaketide, suggesting that the CMet domain is programmed to selectively catalyze two successive C-alpha-methylation reactions of the nonaketide, while other alpha-carbons are non- or mono-methylated only. While the origin of the 4'-deoxyglucose moiety remains opaque, its transfer to C-3 is most likely mediated by the C-glycosyltransferase FPY2. Next to this, the hydroxyl group present at C-33 and discriminating between FPY and dFPY, is likely to be installed by the cytochrome P450 monooxygenase FPY7. No putative function can be predicted for the remaining genes FPY3-FPY6. The chain is Dehydrogenase FPY6 from Fusarium mangiferae (Mango malformation disease fungus).